Reading from the N-terminus, the 1376-residue chain is DNA-directed RNA polymerase subunit beta'' (1376 aa).

Zn(2+) contacts are provided by Cys221, Cys290, Cys297, and Cys300. Residues 895–919 (PSGSGFPSDNELDHSNRNPFSSSYP) form a disordered region.

It belongs to the RNA polymerase beta' chain family. RpoC2 subfamily. As to quaternary structure, in plastids the minimal PEP RNA polymerase catalytic core is composed of four subunits: alpha, beta, beta', and beta''. When a (nuclear-encoded) sigma factor is associated with the core the holoenzyme is formed, which can initiate transcription. It depends on Zn(2+) as a cofactor.

It is found in the plastid. Its subcellular location is the chloroplast. The enzyme catalyses RNA(n) + a ribonucleoside 5'-triphosphate = RNA(n+1) + diphosphate. Functionally, DNA-dependent RNA polymerase catalyzes the transcription of DNA into RNA using the four ribonucleoside triphosphates as substrates. The polypeptide is DNA-directed RNA polymerase subunit beta'' (Pelargonium hortorum (Common geranium)).